Here is a 378-residue protein sequence, read N- to C-terminus: Spermidine/putrescine import ATP-binding protein PotA (378 aa).

Residues 18–248 (VQLAGIRKCF…PKNLFVAGFI (231 aa)) form the ABC transporter domain. Position 50 to 57 (50 to 57 (GPSGCGKT)) interacts with ATP.

It belongs to the ABC transporter superfamily. Spermidine/putrescine importer (TC 3.A.1.11.1) family. In terms of assembly, the complex is composed of two ATP-binding proteins (PotA), two transmembrane proteins (PotB and PotC) and a solute-binding protein (PotD).

It is found in the cell inner membrane. It catalyses the reaction ATP + H2O + polyamine-[polyamine-binding protein]Side 1 = ADP + phosphate + polyamineSide 2 + [polyamine-binding protein]Side 1.. Functionally, part of the ABC transporter complex PotABCD involved in spermidine/putrescine import. Responsible for energy coupling to the transport system. The chain is Spermidine/putrescine import ATP-binding protein PotA from Escherichia coli O1:K1 / APEC.